A 667-amino-acid chain; its full sequence is Receptor for retinol uptake STRA6 (667 aa).

A compositionally biased stretch (polar residues) spans 1–13 (MSSQPAGNQTSPG). Residues 1-20 (MSSQPAGNQTSPGATEDYSY) are disordered. Topologically, residues 1–50 (MSSQPAGNQTSPGATEDYSYGSWYIDEPQGGEELQPEGEVPSCHTSIPPG) are extracellular. Asparagine 8 carries an N-linked (GlcNAc...) asparagine glycan. A helical transmembrane segment spans residues 51–71 (LYHACLASLSILVLLLLAMLV). Over 72–100 (RRRQLWPDCVRGRPGLPSPVDFLAGDRPR) the chain is Cytoplasmic. Residues 101–121 (AVPAAVFMVLLSSLCLLLPDE) traverse the membrane as a helical segment. The Extracellular segment spans residues 122-144 (DALPFLTLASAPSQDGKTEAPRG). Residues 145-165 (AWKILGLFYYAALYYPLAACA) form a helical membrane-spanning segment. At 166–168 (TAG) the chain is on the cytoplasmic side. Residues 169 to 189 (HTAAHLLGSTLSWAHLGVQVW) traverse the membrane as a helical segment. Residues 190-205 (QRAECPQVPKIYKYYS) lie on the Extracellular side of the membrane. A helical transmembrane segment spans residues 206 to 226 (LLASLPLLLGLGFLSLWYPVQ). The Cytoplasmic portion of the chain corresponds to 227–295 (LVRSFSRRTG…PQPGFHLPLK (69 aa)). An interaction with RBP1 region spans residues 235-293 (TGAGSKGLQSSYSEEYLRNLLCRKKLGSSYHTSKHGFLSWARVCLRHCIYTPQPGFHLP). Residues 296-316 (LVLSATLTGTAIYQVALLLLV) form a helical membrane-spanning segment. Over 317 to 367 (GVVPTIQKVRAGVTTDVSYLLAGFGIVLSEDKQEVVELVKHHLWALEVCYI) the chain is Extracellular. The chain crosses the membrane as a helical span at residues 368–388 (SALVLSCLLTFLVLMRSLVTH). Topologically, residues 389-422 (RTNLRALHRGAALDLSPLHRSPHPSRQAIFCWMS) are cytoplasmic. The helical transmembrane segment at 423–443 (FSAYQTAFICLGLLVQQIIFF) threads the bilayer. Topologically, residues 444–473 (LGTTALAFLVLMPVLHGRNLLLFRSLESSW) are extracellular. The chain crosses the membrane as a helical span at residues 474–494 (PFWLTLALAVILQNMAAHWVF). Topologically, residues 495 to 509 (LETHDGHPQLTNRRV) are cytoplasmic. The segment at residues 510–547 (LYAATFLLFPLNVLVGAMVATWRVLLSALYNAIHLGQM) is an intramembrane region (helical). Over 548-667 (DLSLLPPRAA…ALLGANGAQP (120 aa)) the chain is Cytoplasmic. Tyrosine 643 is modified (phosphotyrosine).

As to quaternary structure, homodimer. Interacts with JAK2 and STAT5. Interacts (via extracellular domains) with RBP4. Interacts (via cytoplasmic domains) with RBP1. Phosphorylated on tyrosine residues in response to RBP4 binding. Phosphorylation requires the presence of LRAT, suggesting it may be triggered by the uptake of retinol that is then metabolized within the cell to retinoids that function as signaling molecules. Broad expression. In adult eye expressed in sclera, retina, retinal pigment epithelium, and trabecular meshwork but not in choroid and iris.

It is found in the cell membrane. Its function is as follows. Functions as a retinol transporter. Accepts all-trans retinol from the extracellular retinol-binding protein RBP4, facilitates retinol transport across the cell membrane, and then transfers retinol to the cytoplasmic retinol-binding protein RBP1. Retinol uptake is enhanced by LRAT, an enzyme that converts retinol to all-trans retinyl esters, the storage forms of vitamin A. Contributes to the activation of a signaling cascade that depends on retinol transport and LRAT-dependent generation of retinol metabolites that then trigger activation of JAK2 and its target STAT5, and ultimately increase the expression of SOCS3 and inhibit cellular responses to insulin. Important for the homeostasis of vitamin A and its derivatives, such as retinoic acid. STRA6-mediated transport is particularly important in the eye, and under conditions of dietary vitamin A deficiency. Does not transport retinoic acid. In Homo sapiens (Human), this protein is Receptor for retinol uptake STRA6 (STRA6).